Consider the following 494-residue polypeptide: Putative transporter SVOPL (494 aa).

Helical transmembrane passes span 48–68 (IALF…IMLI), 86–106 (VAFV…LFGL), 121–141 (FLWG…IWFV), 179–199 (VFWL…IPTI), 203–223 (WLIR…KFIP), 281–301 (TLQI…VILA), 350–370 (IIST…INFL), 385–405 (LFFL…FLFM), 431–451 (AIGM…APFI), and 460–480 (FLGA…SAFT).

It belongs to the major facilitator superfamily.

The protein localises to the membrane. This is Putative transporter SVOPL (Svopl) from Mus musculus (Mouse).